Reading from the N-terminus, the 334-residue chain is MVSYSKNVFVPLTRLCRNRCAYCTFRREPEEVRSPYLSPEEVFEIVEKGKEAGCKEVLFTFGERPEERYDEALEWLEEHGYSSTVEYLVDLCRRCVEEYDMLPHSNPGVITKREMRKLRRWNASMGLMMEILSERLCEESGPHEHSPGKRPEERLKVLKYAGELKVPFTTGILIGIGETWEERVKTLEEIQRMHERYGHVQEVIVQNFRTKPGIPMEDHPEPTPADLLRTVATARLILPDVPVQVPPNLNRETGQLALLAGANDWGGVSPVTKDYVNPEAPWPEIEELKRLTEDVGFRLRERLPIYPEYVRRGWYHANISEVVERLSDDEGFAR.

A Radical SAM core domain is found at 2-248; that stretch reads VSYSKNVFVP…PDVPVQVPPN (247 aa). [4Fe-4S] cluster is bound by residues Cys16, Cys20, and Cys23.

The protein belongs to the radical SAM superfamily. CofG family. In terms of assembly, consists of two subunits, CofG and CofH. It depends on [4Fe-4S] cluster as a cofactor.

The enzyme catalyses 5-amino-5-(4-hydroxybenzyl)-6-(D-ribitylimino)-5,6-dihydrouracil + S-adenosyl-L-methionine = 7,8-didemethyl-8-hydroxy-5-deazariboflavin + 5'-deoxyadenosine + L-methionine + NH4(+) + H(+). It participates in cofactor biosynthesis; coenzyme F0 biosynthesis. Functionally, catalyzes the radical-mediated synthesis of 7,8-didemethyl-8-hydroxy-5-deazariboflavin from 5-amino-5-(4-hydroxybenzyl)-6-(D-ribitylimino)-5,6-dihydrouracil. The protein is 7,8-didemethyl-8-hydroxy-5-deazariboflavin synthase of Methanopyrus kandleri (strain AV19 / DSM 6324 / JCM 9639 / NBRC 100938).